The primary structure comprises 352 residues: Bifunctional protein FolD 1, mitochondrial (352 aa).

The transit peptide at 1–23 directs the protein to the mitochondrion; that stretch reads MLMIARKALASAHTKAFRLATRD.

The protein belongs to the tetrahydrofolate dehydrogenase/cyclohydrolase family. Homodimer.

It is found in the mitochondrion. The enzyme catalyses (6R)-5,10-methylene-5,6,7,8-tetrahydrofolate + NADP(+) = (6R)-5,10-methenyltetrahydrofolate + NADPH. It catalyses the reaction (6R)-5,10-methenyltetrahydrofolate + H2O = (6R)-10-formyltetrahydrofolate + H(+). Its pathway is one-carbon metabolism; tetrahydrofolate interconversion. Its function is as follows. Catalyzes the oxidation of 5,10-methylenetetrahydrofolate to 5,10-methenyltetrahydrofolate and then the hydrolysis of 5,10-methenyltetrahydrofolate to 10-formyltetrahydrofolate. The polypeptide is Bifunctional protein FolD 1, mitochondrial (FOLD1) (Arabidopsis thaliana (Mouse-ear cress)).